Here is a 414-residue protein sequence, read N- to C-terminus: Isocitrate dehydrogenase [NADP] cytoplasmic (414 aa).

Residue serine 2 is modified to N-acetylserine. Phosphotyrosine is present on tyrosine 42. 75–77 (TIT) provides a ligand contact to NADP(+). A substrate-binding site is contributed by threonine 77. At lysine 81 the chain carries N6-acetyllysine. Arginine 82 is a binding site for NADP(+). Substrate is bound by residues 94 to 100 (SPNGTIR) and arginine 109. Position 126 is an N6-succinyllysine (lysine 126). The substrate site is built by arginine 132 and lysine 212. An N6-acetyllysine mark is found at lysine 224, lysine 233, and lysine 243. Position 252 (aspartate 252) interacts with Mn(2+). Lysine 260 lines the NADP(+) pocket. Aspartate 275 and aspartate 279 together coordinate Mn(2+). Residue 310 to 315 (GTVTRH) participates in NADP(+) binding. An N6-acetyllysine modification is found at lysine 321. Asparagine 328 provides a ligand contact to NADP(+). Serine 389 carries the phosphoserine modification. N6-succinyllysine is present on lysine 400.

It belongs to the isocitrate and isopropylmalate dehydrogenases family. As to quaternary structure, homodimer. The cofactor is Mg(2+). Requires Mn(2+) as cofactor. Post-translationally, acetylation at Lys-374 dramatically reduces catalytic activity.

It is found in the cytoplasm. The protein localises to the cytosol. The protein resides in the peroxisome. The enzyme catalyses D-threo-isocitrate + NADP(+) = 2-oxoglutarate + CO2 + NADPH. Catalyzes the NADP(+)-dependent oxidative decarboxylation of isocitrate (D-threo-isocitrate) to 2-ketoglutarate (2-oxoglutarate), which is required by other enzymes such as the phytanoyl-CoA dioxygenase. Plays a critical role in the generation of NADPH, an important cofactor in many biosynthesis pathways. May act as a corneal epithelial crystallin and may be involved in maintaining corneal epithelial transparency. The chain is Isocitrate dehydrogenase [NADP] cytoplasmic (IDH1) from Homo sapiens (Human).